Reading from the N-terminus, the 495-residue chain is MAGKLVSLVPPLLLAAAGLTGLLLLCVPTQDVREPPALKYGIVLDAGSSHTSMFVYKWPADKENDTGIVGQHSSCDVQGGGISSYANDPSKAGQSLVRCLEQALRDVPRDRHASTPLYLGATAGMRPFNLTSPEATARVLEAVTQTLTQYPFDFRGARILSGQDEGVFGWVTANYLLENFIKYGWVGRWIRPRKGTLGAMDLGGASTQITFETTSPSEDPGNEVHLRLYGQHYRVYTHSFLCYGRDQILLRLLASALQIHRFHPCWPKGYSTQVLLQEVYQSPCTMGQRPRAFNGSAIVSLSGTSNATLCRDLVSRLFNISSCPFSQCSFNGVFQPPVAGNFIAFSAFYYTVDFLTTVMGLPVGTLKQLEEATEITCNQTWTELQARVPGQKTRLADYCAVAMFIHQLLSRGYHFDERSFREVVFQKKAADTAVGWALGYMLNLTNLIPADLPGLRKGTHFSSWVALLLLFTVLILAALVLLLRQVRSAKSPGAL.

Topologically, residues 1-4 (MAGK) are cytoplasmic. The chain crosses the membrane as a helical span at residues 5–25 (LVSLVPPLLLAAAGLTGLLLL). The Extracellular segment spans residues 26-462 (CVPTQDVREP…PGLRKGTHFS (437 aa)). The N-linked (GlcNAc...) asparagine glycan is linked to Asn64. Cys75 and Cys99 are disulfide-bonded. The N-linked (GlcNAc...) asparagine glycan is linked to Asn129. Glu165 acts as the Proton acceptor in catalysis. 204-208 (GASTQ) contributes to the ATP binding site. Cystine bridges form between Cys242/Cys284 and Cys265/Cys310. N-linked (GlcNAc...) asparagine glycosylation is found at Asn294, Asn306, and Asn319. 2 disulfides stabilise this stretch: Cys323-Cys328 and Cys377-Cys399. Asn378 and Asn443 each carry an N-linked (GlcNAc...) asparagine glycan. A helical membrane pass occupies residues 463–483 (SWVALLLLFTVLILAALVLLL). At 484–495 (RQVRSAKSPGAL) the chain is on the cytoplasmic side.

The protein belongs to the GDA1/CD39 NTPase family. Ca(2+) is required as a cofactor. The cofactor is Mg(2+). Expressed in brain, heart, vas deferens, kidney, skeletal muscle, thymus, lung and spleen. Weak expression in liver.

The protein resides in the cell membrane. In the nervous system, could hydrolyze ATP and other nucleotides to regulate purinergic neurotransmission. Hydrolyzes ADP only to a marginal extent. In Rattus norvegicus (Rat), this protein is Ectonucleoside triphosphate diphosphohydrolase 2 (Entpd2).